Here is a 180-residue protein sequence, read N- to C-terminus: Meiotic recombination protein rec15 (180 aa).

Homomer. Interacts (via C-terminus) with hop1 (via C-terminus); the interaction is direct. Interacts (via C-terminus) with rec10; the interaction is direct. Interacts with mde2; the interaction is direct.

It localises to the nucleus. The protein resides in the chromosome. Its function is as follows. Required during the early stages of meiosis for meiotic recombination. This chain is Meiotic recombination protein rec15, found in Schizosaccharomyces pombe (strain 972 / ATCC 24843) (Fission yeast).